The following is a 273-amino-acid chain: Orotidine 5'-phosphate decarboxylase (273 aa).

The active-site Proton donor is K96.

This sequence belongs to the OMP decarboxylase family. Type 2 subfamily.

The enzyme catalyses orotidine 5'-phosphate + H(+) = UMP + CO2. Its pathway is pyrimidine metabolism; UMP biosynthesis via de novo pathway; UMP from orotate: step 2/2. The protein is Orotidine 5'-phosphate decarboxylase of Flavobacterium johnsoniae (strain ATCC 17061 / DSM 2064 / JCM 8514 / BCRC 14874 / CCUG 350202 / NBRC 14942 / NCIMB 11054 / UW101) (Cytophaga johnsonae).